A 260-amino-acid polypeptide reads, in one-letter code: Carbonic anhydrase 2 (260 aa).

Residue Ser2 is modified to N-acetylserine. At Ser2 the chain carries Phosphoserine. Residues 3 to 259 (HHWGYGEHNG…LKNRQVRVFP (257 aa)) form the Alpha-carbonic anhydrase domain. The Proton donor/acceptor role is filled by His64. His94, His96, and His119 together coordinate Zn(2+). Phosphoserine is present on residues Ser165 and Ser172. 198 to 199 (TN) serves as a coordination point for substrate.

It belongs to the alpha-carbonic anhydrase family. Interacts with SLC4A4 and SLC26A6. Interaction with SLC4A7 regulates SLC4A7 transporter activity. Zn(2+) serves as cofactor.

The protein localises to the cytoplasm. The protein resides in the cell membrane. It catalyses the reaction hydrogencarbonate + H(+) = CO2 + H2O. The catalysed reaction is urea = cyanamide + H2O. With respect to regulation, inhibited by acetazolamide. Catalyzes the reversible hydration of carbon dioxide. Can also hydrate cyanamide to urea. Involved in the regulation of fluid secretion into the anterior chamber of the eye. Essential for bone resorption and osteoclast differentiation. Contributes to intracellular pH regulation in the duodenal upper villous epithelium during proton-coupled peptide absorption. Stimulates the chloride-bicarbonate exchange activity of SLC26A6. This Ovis aries (Sheep) protein is Carbonic anhydrase 2 (CA2).